The chain runs to 282 residues: Acetyl-coenzyme A carboxylase carboxyl transferase subunit beta (282 aa).

Residues 29–282 (LWRTCPKCQR…LMKYGGKQND (254 aa)) enclose the CoA carboxyltransferase N-terminal domain. Positions 33, 36, 51, and 54 each coordinate Zn(2+). Residues 33–54 (CPKCQRTLFAAQMDEYATCPGC) form a C4-type zinc finger.

This sequence belongs to the AccD/PCCB family. As to quaternary structure, acetyl-CoA carboxylase is a heterohexamer composed of biotin carboxyl carrier protein (AccB), biotin carboxylase (AccC) and two subunits each of ACCase subunit alpha (AccA) and ACCase subunit beta (AccD). Zn(2+) serves as cofactor.

It is found in the cytoplasm. The catalysed reaction is N(6)-carboxybiotinyl-L-lysyl-[protein] + acetyl-CoA = N(6)-biotinyl-L-lysyl-[protein] + malonyl-CoA. It participates in lipid metabolism; malonyl-CoA biosynthesis; malonyl-CoA from acetyl-CoA: step 1/1. Component of the acetyl coenzyme A carboxylase (ACC) complex. Biotin carboxylase (BC) catalyzes the carboxylation of biotin on its carrier protein (BCCP) and then the CO(2) group is transferred by the transcarboxylase to acetyl-CoA to form malonyl-CoA. This Limosilactobacillus fermentum (strain NBRC 3956 / LMG 18251) (Lactobacillus fermentum) protein is Acetyl-coenzyme A carboxylase carboxyl transferase subunit beta.